Reading from the N-terminus, the 191-residue chain is UPF0398 protein LSEI_1479 (191 aa).

The protein belongs to the UPF0398 family.

This chain is UPF0398 protein LSEI_1479, found in Lacticaseibacillus paracasei (strain ATCC 334 / BCRC 17002 / CCUG 31169 / CIP 107868 / KCTC 3260 / NRRL B-441) (Lactobacillus paracasei).